We begin with the raw amino-acid sequence, 250 residues long: Aquaporin TIP2-2 (250 aa).

2 helical membrane passes run 22–42 (VAEF…AIAF) and 54–74 (AGLV…VSVA). Residues 83–85 (NPA) carry the NPA 1 motif. The next 3 membrane-spanning stretches (helical) occupy residues 97–119 (TVLT…CLLL), 142–162 (GVVF…ATAA), and 169–189 (LGTI…LAAG). The NPA 2 signature appears at 197–199 (NPA). Residues 218-238 (WVGPLIGGGLAGLVYGDVFIG) traverse the membrane as a helical segment.

The protein belongs to the MIP/aquaporin (TC 1.A.8) family. TIP (TC 1.A.8.10) subfamily.

It localises to the vacuole membrane. In terms of biological role, aquaporins facilitate the transport of water and small neutral solutes across cell membranes. In Zea mays (Maize), this protein is Aquaporin TIP2-2 (TIP2-2).